The primary structure comprises 588 residues: L-fucose isomerase (588 aa).

Active-site proton acceptor residues include glutamate 335 and aspartate 359. Residues glutamate 335, aspartate 359, and histidine 525 each contribute to the Mn(2+) site.

The protein belongs to the L-fucose isomerase family. Mn(2+) is required as a cofactor.

The protein resides in the cytoplasm. The catalysed reaction is L-fucose = L-fuculose. It participates in carbohydrate degradation; L-fucose degradation; L-lactaldehyde and glycerone phosphate from L-fucose: step 1/3. Converts the aldose L-fucose into the corresponding ketose L-fuculose. This Streptococcus pneumoniae (strain Hungary19A-6) protein is L-fucose isomerase.